The chain runs to 251 residues: Pyrroloquinoline-quinone synthase (251 aa).

It belongs to the PqqC family.

It catalyses the reaction 6-(2-amino-2-carboxyethyl)-7,8-dioxo-1,2,3,4,7,8-hexahydroquinoline-2,4-dicarboxylate + 3 O2 = pyrroloquinoline quinone + 2 H2O2 + 2 H2O + H(+). Its pathway is cofactor biosynthesis; pyrroloquinoline quinone biosynthesis. Ring cyclization and eight-electron oxidation of 3a-(2-amino-2-carboxyethyl)-4,5-dioxo-4,5,6,7,8,9-hexahydroquinoline-7,9-dicarboxylic-acid to PQQ. The protein is Pyrroloquinoline-quinone synthase of Pseudomonas putida (strain W619).